A 106-amino-acid chain; its full sequence is Iron-sulfur cluster assembly protein CyaY (106 aa).

Belongs to the frataxin family.

Functionally, involved in iron-sulfur (Fe-S) cluster assembly. May act as a regulator of Fe-S biogenesis. This is Iron-sulfur cluster assembly protein CyaY from Salmonella heidelberg (strain SL476).